The chain runs to 999 residues: Ulvan lyase, long isoform (999 aa).

The first 21 residues, 1 to 21 (MKCLKTLLVSTTLLTAFSLNA), serve as a signal peptide directing secretion. Substrate is bound at residue 126 to 127 (SH). The Proton donor/acceptor role is filled by His127. The Ca(2+) site is built by Asp189, Asp199, and Lys201. Substrate-binding residues include Tyr280 and Arg297. Asp300, Asp303, and Tyr305 together coordinate Ca(2+). Tyr361 serves as a coordination point for substrate.

Belongs to the polysaccharide lyase 24 family.

In terms of biological role, ulvan lyase involved in ulvan degradation. Ulvan is the main polysaccharide component of the Ulvales (green seaweed) cell wall. It is composed of disaccharide building blocks comprising 3-sulfated rhamnose (Rha3S) linked to D-glucuronic acid (GlcA), L-iduronic acid (IduA), or D-xylose (Xyl). Ulvan lyase catalyzes preferentially the endolytic cleavage of the glycosidic bond between Rha3S and the uronic acid GlcA, but not IduA, producing oligosaccharides that have unsaturated 4-deoxy-L-threo-hex-4-enopyranosiduronic acid (deltaUA) at the non-reducing end. The most abundant end products in the degradation of the ulvan polysaccharide were deltaUA-Rha3S disaccharides and deltaUA-Rha3S-IduA-Rha3S and deltaUA-Rha3S-Xyl-Rha3S tetrasaccharides. This is Ulvan lyase, long isoform from Alteromonas sp. (strain LOR).